The following is a 263-amino-acid chain: Small ribosomal subunit protein uS2 (263 aa).

Belongs to the universal ribosomal protein uS2 family. Component of the small ribosomal subunit. Mature ribosomes consist of a small (40S) and a large (60S) subunit. The 40S subunit contains about 33 different proteins and 1 molecule of RNA (18S). The 60S subunit contains about 49 different proteins and 3 molecules of RNA (25S, 5.8S and 5S). Interacts with RPS21.

The protein localises to the cytoplasm. Required for the assembly and/or stability of the 40S ribosomal subunit. Required for the processing of the 20S rRNA-precursor to mature 18S rRNA in a late step of the maturation of 40S ribosomal subunits. This chain is Small ribosomal subunit protein uS2, found in Vairimorpha ceranae (strain BRL01) (Microsporidian parasite).